The sequence spans 568 residues: MELFYWCLLCLLLPLTSRTQKLPTRDEELFQMQIRDKEFFHDSSVIPDGAEVSSYLFRDTPRRYFFMVEEDNTPLSVTVTPCDAPLEWKLSLQELHEGSSADGSGDPELLDQQKQQMTDVEGTELFSYKGNDVEYFLSSSSPSGLYQLELLSTEKDTHFKVYATTTPESDQPYPELPYDPRVDVTSFGRTTVTLAWKPSPTASILKQPIEYCVVINKEHNFKSLCAAETKMNADDAFMVAPKPGLDFNPFDFAHFGFPTDNLGKDRSLLAKPSPKVGRHVYWRPKVDIQKICIGNKNIFTVSDLKPDTQYYFDVFMVNTNTNMSTAYVGAFVRTKEEAKQKTVELKDGRVTDVFVKRKGKKFLRFAPVSSHQKVTFFIHSCMDAVQVQVRRDGRLLLSQNVEGIRQFQLRGKPKGKYLIRLKGNRKGASKLKILATTRPSKHAFPSLPEDTRIKAFDKLRTCSSVTVAWLGTQERRKFCIYRKEVDGNYSEDQKRREQNQCLGPDTRKKSEKVLCKYFHSQNLQKAVTTETIRDLQPGKSYLLDVYVVGHGGHSVKYQSKIVKTRKVC.

A signal peptide spans 1–19 (MELFYWCLLCLLLPLTSRT). Fibronectin type-III domains lie at 261 to 331 (NLGK…VGAF) and 445 to 564 (PSLP…IVKT). N-linked (GlcNAc...) asparagine glycans are attached at residues Asn322 and Asn488.

In terms of assembly, binds heparin and chondroitin sulfate. O-glycosylated; contains heparan sulfate and chondroitin sulfate. Post-translationally, N-glycosylated. As to expression, expressed in brain and spinal cord with no expression detected in heart, kidney or liver. Expressed by neurons but not by astrocytes. In the brain, detected in the cerebrum, cerebellum and olfactory bulbs. In the cerebral cortex, highly expressed in Cajal-Retzius cells. Also expressed in hippocampal neurons and in Purkinje and granule cells of the cerebellum (at protein level). Expressed in neurons along the GnRH migratory route.

The protein localises to the secreted. Its function is as follows. Secretory protein that plays a role in various cellular processes. Acts as a chemorepellent acting on gonadotropin-releasing hormone (GnRH) expressing neurons regulating their migration to the hypothalamus. Also promotes neuron migration, growth and survival as well as neurite outgrowth and is involved in the development of the olfactory system. May also act through the regulation of growth factors activity and downstream signaling. Also regulates extracellular matrix assembly and cell adhesiveness. Promotes endothelial cell survival, vessel formation and plays an important role in the process of revascularization through NOS3-dependent mechanisms. The polypeptide is Protein NDNF (Ndnf) (Mus musculus (Mouse)).